The primary structure comprises 340 residues: Probable HTH-type transcriptional regulator EndR (340 aa).

One can recognise an HTH lacI-type domain in the interval M1 to Q58. Residues M5–Q24 constitute a DNA-binding region (H-T-H motif).

Functionally, putative repressor of the endoglucanase operon. The protein is Probable HTH-type transcriptional regulator EndR (endR) of Paenibacillus polymyxa (Bacillus polymyxa).